A 179-amino-acid chain; its full sequence is Coatomer subunit zeta-2 (179 aa).

Belongs to the adaptor complexes small subunit family. As to quaternary structure, oligomeric complex that consists of at least the alpha, beta, beta', gamma, delta, epsilon and zeta subunits.

It is found in the cytoplasm. It localises to the golgi apparatus membrane. The protein resides in the cytoplasmic vesicle. The protein localises to the COPI-coated vesicle membrane. Its function is as follows. The coatomer is a cytosolic protein complex that binds to dilysine motifs and reversibly associates with Golgi non-clathrin-coated vesicles, which further mediate biosynthetic protein transport from the ER, via the Golgi up to the trans Golgi network. Coatomer complex is required for budding from Golgi membranes, and is essential for the retrograde Golgi-to-ER transport of dilysine-tagged proteins. The zeta subunit may be involved in regulating the coat assembly and, hence, the rate of biosynthetic protein transport due to its association-dissociation properties with the coatomer complex. The polypeptide is Coatomer subunit zeta-2 (Arabidopsis thaliana (Mouse-ear cress)).